A 220-amino-acid polypeptide reads, in one-letter code: Tumor protein p53-inducible nuclear protein 2 (220 aa).

Residues 1–12 are compositionally biased toward low complexity; that stretch reads MFQRLSSLFFST. 3 disordered regions span residues 1-24, 41-69, and 119-220; these read MFQR…CPRA, PDSY…LMDE, and PGSP…QFNY. Phosphoserine is present on Ser14. Residues 26–41 carry the LIR motif; the sequence is VSEEDEVDGWLIIDLP. Residues 47-64 show a composition bias toward pro residues; that stretch reads PPSPGAAPAPAGRPPPAP. Phosphoserine is present on Ser136. Over residues 152–170 the composition is skewed to low complexity; the sequence is HAAPLPARAALLEKAGQVR. A compositionally biased stretch (polar residues) spans 205 to 220; sequence NQSSFIYQPCQRQFNY.

As to quaternary structure, interacts with VMP1, GABARAP, GABARAPL1, GABARAPL2, MAP1LC3A, MAP1LC3B, MAP1LC3C and THRA.

The protein localises to the cytoplasm. It is found in the cytosol. It localises to the nucleus. The protein resides in the PML body. Its subcellular location is the cytoplasmic vesicle. The protein localises to the autophagosome. Functionally, dual regulator of transcription and autophagy. Positively regulates autophagy and is required for autophagosome formation and processing. May act as a scaffold protein that recruits MAP1LC3A, GABARAP and GABARAPL2 and brings them to the autophagosome membrane by interacting with VMP1 where, in cooperation with the BECN1-PI3-kinase class III complex, they trigger autophagosome development. Acts as a transcriptional activator of THRA. The polypeptide is Tumor protein p53-inducible nuclear protein 2 (TP53INP2) (Homo sapiens (Human)).